Consider the following 186-residue polypeptide: Ran guanine nucleotide release factor (186 aa).

The interval 27-70 (DLRPVPDHQEVFCHRVTDQSLIVELLELQAHVQGEEAARYHFED) is interaction with RAN.

Belongs to the MOG1 family. As to quaternary structure, monomer. Interacts with RAN, both RAN-GTP and RAN-GDP. Competes with RCC1 for a common binding site on RAN and thereby inhibits RCC1-mediated nucleotide exchange. Forms a complex with RAN-GTP and RANBP1. Interacts with the cytoplasmic loop 2 of SCN5A.

The protein localises to the nucleus. The protein resides in the cytoplasm. It is found in the perinuclear region. It localises to the cell membrane. In terms of biological role, may regulate the intracellular trafficking of RAN. Promotes guanine nucleotide release from RAN and inhibits binding of new GTP by preventing the binding of the RAN guanine nucleotide exchange factor RCC1. Regulates the levels of GTP-bound RAN in the nucleus, and thereby plays a role in the regulation of RAN-dependent mitotic spindle dynamics. Enhances the expression of SCN5A at the cell membrane in cardiomyocytes. The chain is Ran guanine nucleotide release factor (RANGRF) from Bos taurus (Bovine).